Here is a 241-residue protein sequence, read N- to C-terminus: Triosephosphate isomerase (241 aa).

Residue 9-11 (NWK) participates in substrate binding. H96 (electrophile) is an active-site residue. The active-site Proton acceptor is E165. Substrate contacts are provided by residues G171, S204, and 225–226 (GG).

The protein belongs to the triosephosphate isomerase family. As to quaternary structure, homodimer.

It localises to the cytoplasm. The enzyme catalyses D-glyceraldehyde 3-phosphate = dihydroxyacetone phosphate. The protein operates within carbohydrate biosynthesis; gluconeogenesis. Its pathway is carbohydrate degradation; glycolysis; D-glyceraldehyde 3-phosphate from glycerone phosphate: step 1/1. Involved in the gluconeogenesis. Catalyzes stereospecifically the conversion of dihydroxyacetone phosphate (DHAP) to D-glyceraldehyde-3-phosphate (G3P). The polypeptide is Triosephosphate isomerase (Gloeothece citriformis (strain PCC 7424) (Cyanothece sp. (strain PCC 7424))).